Consider the following 193-residue polypeptide: Xanthine phosphoribosyltransferase (193 aa).

Residues leucine 20 and asparagine 27 each contribute to the xanthine site. Residue 127–131 (AYGNA) participates in 5-phospho-alpha-D-ribose 1-diphosphate binding. Lysine 155 lines the xanthine pocket.

This sequence belongs to the purine/pyrimidine phosphoribosyltransferase family. Xpt subfamily. In terms of assembly, homodimer.

Its subcellular location is the cytoplasm. It catalyses the reaction XMP + diphosphate = xanthine + 5-phospho-alpha-D-ribose 1-diphosphate. It functions in the pathway purine metabolism; XMP biosynthesis via salvage pathway; XMP from xanthine: step 1/1. Its function is as follows. Converts the preformed base xanthine, a product of nucleic acid breakdown, to xanthosine 5'-monophosphate (XMP), so it can be reused for RNA or DNA synthesis. The protein is Xanthine phosphoribosyltransferase of Porphyromonas gingivalis (strain ATCC BAA-308 / W83).